The chain runs to 84 residues: MRVKIKCWNGVATWLWVANDENCGICRMAFNGCCPDCKVPGDDCPLVWGQCSHCFHMHCILKWLNAQQVQQHCPMCRQEWKFKE.

Cys23, Cys26, Cys34, Cys37, Cys44, Cys51, His53, His56, His58, Cys59, Cys73, and Cys76 together coordinate Zn(2+). Residues 34–77 form an RING-type zinc finger; that stretch reads CPDCKVPGDDCPLVWGQCSHCFHMHCILKWLNAQQVQQHCPMCR.

This sequence belongs to the RING-box family. The mammalian APC/C is composed at least of 14 distinct subunits ANAPC1, ANAPC2, CDC27/APC3, ANAPC4, ANAPC5, CDC16/APC6, ANAPC7, CDC23/APC8, ANAPC10, ANAPC11, CDC26/APC12, ANAPC13, ANAPC15 and ANAPC16 that assemble into a complex of at least 19 chains with a combined molecular mass of around 1.2 MDa; APC/C interacts with FZR1 and FBXO5. Interacts with the cullin domain of ANAPC2. Interacts with UBE2D2. Auto-ubiquitinated.

It is found in the cytoplasm. The protein localises to the nucleus. It functions in the pathway protein modification; protein ubiquitination. Functionally, together with the cullin protein ANAPC2, constitutes the catalytic component of the anaphase promoting complex/cyclosome (APC/C), a cell cycle-regulated E3 ubiquitin ligase that controls progression through mitosis and the G1 phase of the cell cycle. The APC/C complex acts by mediating ubiquitination and subsequent degradation of target proteins: it mainly mediates the formation of 'Lys-11'-linked polyubiquitin chains and, to a lower extent, the formation of 'Lys-48'- and 'Lys-63'-linked polyubiquitin chains. The APC/C complex catalyzes assembly of branched 'Lys-11'-/'Lys-48'-linked branched ubiquitin chains on target proteins. May recruit the E2 ubiquitin-conjugating enzymes to the complex. The polypeptide is Anaphase-promoting complex subunit 11 (ANAPC11) (Bos taurus (Bovine)).